The chain runs to 191 residues: Akirin-1 (191 aa).

The interval 17 to 70 (LLSPGSPKRRRCAPLPGPTPGLRPPDAEPPPLQMQTPPASLQQPAPPGSERRLP) is disordered. A Phosphoserine modification is found at S22. Residues 23 to 28 (PKRRRC) carry the Nuclear localization signal motif. Positions 31–48 (LPGPTPGLRPPDAEPPPL) are enriched in pro residues. The span at 49 to 59 (QMQTPPASLQQ) shows a compositional bias: polar residues. T71 is modified (phosphothreonine). Positions 188–191 (SYVS) match the SYVS motif motif.

It belongs to the akirin family. Expressed in macrophages and satellite cells.

It localises to the nucleus. Its function is as follows. Molecular adapter that acts as a bridge between proteins, and which is involved skeletal muscle development. Functions as a signal transducer for MSTN during skeletal muscle regeneration and myogenesis. May regulate chemotaxis of both macrophages and myoblasts by reorganising actin cytoskeleton, leading to more efficient lamellipodia formation via a PI3 kinase dependent pathway. In contrast to AKIRIN2, not involved in nuclear import of proteasomes. In Mus musculus (Mouse), this protein is Akirin-1.